A 129-amino-acid polypeptide reads, in one-letter code: MIVGIGIDIVELERIRSLLERSRKFPERILTPREKAQFGELPPARQAEFLAGRFAAKEAYAKALGTGIGRHLSFQDIEIVSDEHGKPSIAARRDGETVHLSISHSRDYAVAQVVIERLGPMTPADACHG.

Asp8 and Glu58 together coordinate Mg(2+).

Belongs to the P-Pant transferase superfamily. AcpS family. It depends on Mg(2+) as a cofactor.

The protein resides in the cytoplasm. The catalysed reaction is apo-[ACP] + CoA = holo-[ACP] + adenosine 3',5'-bisphosphate + H(+). Its function is as follows. Transfers the 4'-phosphopantetheine moiety from coenzyme A to a Ser of acyl-carrier-protein. The protein is Holo-[acyl-carrier-protein] synthase of Geobacillus kaustophilus (strain HTA426).